The primary structure comprises 208 residues: Small ribosomal subunit protein uS4 (208 aa).

The region spanning 98–160 (RRIDNTVYRL…SRQLQMINEA (63 aa)) is the S4 RNA-binding domain.

It belongs to the universal ribosomal protein uS4 family. In terms of assembly, part of the 30S ribosomal subunit. Contacts protein S5. The interaction surface between S4 and S5 is involved in control of translational fidelity.

Its function is as follows. One of the primary rRNA binding proteins, it binds directly to 16S rRNA where it nucleates assembly of the body of the 30S subunit. With S5 and S12 plays an important role in translational accuracy. The polypeptide is Small ribosomal subunit protein uS4 (Syntrophobacter fumaroxidans (strain DSM 10017 / MPOB)).